The primary structure comprises 269 residues: Phosphatidate cytidylyltransferase (269 aa).

Helical transmembrane passes span 13-33 (LAAIVFLFLVIVGKLPFTILI), 50-70 (LKLVSLPGLIGLLLLWMFLLP), 81-101 (ISKMEIALFAVLLLLTYTVLV), 110-130 (VGFITLAAIYIGMCFHYFIEI), 138-158 (LTYIFYACVVIWSTDSGAYFV), 180-200 (FAGGIVIALVLATIFQLVAQL), 201-221 (PIPYIYLLLITLFLSVFGQLG), and 247-267 (ILDRFDSFLFVMPFLYFLLAL).

The protein belongs to the CDS family.

The protein localises to the cell membrane. The catalysed reaction is a 1,2-diacyl-sn-glycero-3-phosphate + CTP + H(+) = a CDP-1,2-diacyl-sn-glycerol + diphosphate. It functions in the pathway phospholipid metabolism; CDP-diacylglycerol biosynthesis; CDP-diacylglycerol from sn-glycerol 3-phosphate: step 3/3. This chain is Phosphatidate cytidylyltransferase (cdsA), found in Bacillus subtilis (strain 168).